Consider the following 342-residue polypeptide: Protein RecA (342 aa).

65 to 72 is an ATP binding site; sequence GPESSGKT.

The protein belongs to the RecA family.

It localises to the cytoplasm. Can catalyze the hydrolysis of ATP in the presence of single-stranded DNA, the ATP-dependent uptake of single-stranded DNA by duplex DNA, and the ATP-dependent hybridization of homologous single-stranded DNAs. It interacts with LexA causing its activation and leading to its autocatalytic cleavage. In Caldanaerobacter subterraneus subsp. tengcongensis (strain DSM 15242 / JCM 11007 / NBRC 100824 / MB4) (Thermoanaerobacter tengcongensis), this protein is Protein RecA.